The chain runs to 542 residues: CTP synthase (542 aa).

An amidoligase domain region spans residues 1-265 (MARYVFITGG…DDEVLAAFGI (265 aa)). Serine 13 lines the CTP pocket. Serine 13 contributes to the UTP binding site. ATP-binding positions include 14–19 (SLGKGI) and aspartate 71. 2 residues coordinate Mg(2+): aspartate 71 and glutamate 139. CTP-binding positions include 146-148 (DIE), 186-191 (KTKPTQ), and lysine 222. UTP-binding positions include 186 to 191 (KTKPTQ) and lysine 222. A Glutamine amidotransferase type-1 domain is found at 291-541 (TIAIVGKYTG…IEAATEQSRL (251 aa)). Residue glycine 353 participates in L-glutamine binding. The active-site Nucleophile; for glutamine hydrolysis is cysteine 380. Residues 381 to 384 (FGMQ), glutamate 404, and arginine 469 each bind L-glutamine. Active-site residues include histidine 514 and glutamate 516.

Belongs to the CTP synthase family. In terms of assembly, homotetramer.

It carries out the reaction UTP + L-glutamine + ATP + H2O = CTP + L-glutamate + ADP + phosphate + 2 H(+). It catalyses the reaction L-glutamine + H2O = L-glutamate + NH4(+). The enzyme catalyses UTP + NH4(+) + ATP = CTP + ADP + phosphate + 2 H(+). It functions in the pathway pyrimidine metabolism; CTP biosynthesis via de novo pathway; CTP from UDP: step 2/2. Allosterically activated by GTP, when glutamine is the substrate; GTP has no effect on the reaction when ammonia is the substrate. The allosteric effector GTP functions by stabilizing the protein conformation that binds the tetrahedral intermediate(s) formed during glutamine hydrolysis. Inhibited by the product CTP, via allosteric rather than competitive inhibition. In terms of biological role, catalyzes the ATP-dependent amination of UTP to CTP with either L-glutamine or ammonia as the source of nitrogen. Regulates intracellular CTP levels through interactions with the four ribonucleotide triphosphates. The polypeptide is CTP synthase (Rhizobium etli (strain ATCC 51251 / DSM 11541 / JCM 21823 / NBRC 15573 / CFN 42)).